The sequence spans 273 residues: Large ribosomal subunit protein uL2cz/uL2cy (273 aa).

2 disordered regions span residues 1–23 (MAIH…SQVK) and 224–273 (NPVD…RRRK). The segment covering 262 to 273 (KYSDRFILRRRK) has biased composition (basic and acidic residues).

It belongs to the universal ribosomal protein uL2 family. As to quaternary structure, part of the 50S ribosomal subunit.

Its subcellular location is the plastid. The protein localises to the chloroplast. This Acorus calamus var. americanus (American sweet flag) protein is Large ribosomal subunit protein uL2cz/uL2cy (rpl2-A).